A 240-amino-acid polypeptide reads, in one-letter code: MRERRKIYEGKAKILFSFPDNPNLVTQHFKDDVTAYNNRKHSVIPGKGVINNYISAFFMQNLQNVGIKTHFVKVLNMREQLVKKAELIPIEVVIRNIVAGGLAKRLGLEEGMILDAPLIETYYKSDSLGDPMVTDDHILSFNWLKLSEIEEMKVMAWRINDFLSGALSSAGIILVDLKLEFGFYDDQIILIDEISPDTCRFWDTETKEKMDKDRFRRDLGGVSKYYREVARRLGILNGSF.

This sequence belongs to the SAICAR synthetase family.

It carries out the reaction 5-amino-1-(5-phospho-D-ribosyl)imidazole-4-carboxylate + L-aspartate + ATP = (2S)-2-[5-amino-1-(5-phospho-beta-D-ribosyl)imidazole-4-carboxamido]succinate + ADP + phosphate + 2 H(+). It participates in purine metabolism; IMP biosynthesis via de novo pathway; 5-amino-1-(5-phospho-D-ribosyl)imidazole-4-carboxamide from 5-amino-1-(5-phospho-D-ribosyl)imidazole-4-carboxylate: step 1/2. This chain is Phosphoribosylaminoimidazole-succinocarboxamide synthase, found in Neorickettsia sennetsu (strain ATCC VR-367 / Miyayama) (Ehrlichia sennetsu).